Here is a 307-residue protein sequence, read N- to C-terminus: Putative ankyrin repeat protein R229 (307 aa).

6 ANK repeats span residues 135–164, 165–194, 196–224, 226–254, 256–284, and 286–307; these read ASRVILGNRLNLRDISTFKYLMSLGVDINV, DNDKPLRWAASRGYYGLVKFLLDNGANVHA, DDEAVQLASRNGYLNVVKILVEYGANVNA, NDYAIQMACKYGYNEIVRFLVFNGANPMA, RYYPIEIATEFGNKLIVRFLLHQDKSMVY, and SYAMDIAVRNENWDLLNVLLLD.

This chain is Putative ankyrin repeat protein R229, found in Acanthamoeba polyphaga (Amoeba).